We begin with the raw amino-acid sequence, 342 residues long: Methylthioribose-1-phosphate isomerase (342 aa).

Substrate-binding positions include 49–51 (RGA), R86, and Q187. D228 functions as the Proton donor in the catalytic mechanism. A substrate-binding site is contributed by 238–239 (NK).

The protein belongs to the eIF-2B alpha/beta/delta subunits family. MtnA subfamily.

It carries out the reaction 5-(methylsulfanyl)-alpha-D-ribose 1-phosphate = 5-(methylsulfanyl)-D-ribulose 1-phosphate. It participates in amino-acid biosynthesis; L-methionine biosynthesis via salvage pathway; L-methionine from S-methyl-5-thio-alpha-D-ribose 1-phosphate: step 1/6. Catalyzes the interconversion of methylthioribose-1-phosphate (MTR-1-P) into methylthioribulose-1-phosphate (MTRu-1-P). The polypeptide is Methylthioribose-1-phosphate isomerase (Klebsiella pneumoniae (strain 342)).